A 356-amino-acid polypeptide reads, in one-letter code: Alpha-N-acetylneuraminide alpha-2,8-sialyltransferase (356 aa).

Over 1–29 (MSPCGRARRQTSRGAMAVLAWKFPRTRLP) the chain is Cytoplasmic. Residues 30–48 (MGASALCVVVLCWLYIFPV) form a helical; Signal-anchor for type II membrane protein membrane-spanning segment. The Lumenal segment spans residues 49–356 (YRLPNEKEIV…CEDTSLQPTS (308 aa)). N71 and N119 each carry an N-linked (GlcNAc...) asparagine glycan. 2 disulfides stabilise this stretch: C138–C287 and C152–C347. CMP-N-acetyl-beta-neuraminate contacts are provided by N143 and N166. 2 N-linked (GlcNAc...) asparagine glycosylation sites follow: N214 and N245. CMP-N-acetyl-beta-neuraminate-binding residues include S274, T275, G276, W296, and H310. The active-site Proton donor/acceptor is the H322.

Belongs to the glycosyltransferase 29 family. As to expression, strongly expressed in melanoma cell lines, adult and fetal brain and to a lesser extent in adult and fetal lung.

Its subcellular location is the golgi apparatus membrane. It carries out the reaction an N-acetyl-alpha-neuraminyl-(2-&gt;3)-beta-D-galactosyl derivative + CMP-N-acetyl-beta-neuraminate = an N-acetyl-alpha-neuraminyl-(2-&gt;8)-N-acetyl-alpha-neuraminyl-(2-&gt;3)-beta-D-galactosyl derivative + CMP + H(+). The catalysed reaction is a ganglioside GM3 (d18:1(4E)) + CMP-N-acetyl-beta-neuraminate = a ganglioside GD3 (d18:1(4E)) + CMP + H(+). The enzyme catalyses a ganglioside GD3 (d18:1(4E)) + CMP-N-acetyl-beta-neuraminate = a ganglioside GT3 (d18:1(4E)) + CMP + H(+). It catalyses the reaction a ganglioside GD1a (d18:1(4E)) + CMP-N-acetyl-beta-neuraminate = a ganglioside GT1a (d18:1(4E)) + CMP + H(+). It carries out the reaction a ganglioside GT1b (d18:1(4E)) + CMP-N-acetyl-beta-neuraminate = a ganglioside GQ1b (d18:1(4E)) + CMP + H(+). The catalysed reaction is a ganglioside GM1b (d18:1(4E)) + CMP-N-acetyl-beta-neuraminate = a ganglioside GD1c (d18:1(4E)) + CMP + H(+). The enzyme catalyses a ganglioside GD3 + CMP-N-acetyl-beta-neuraminate = a ganglioside GT3 + CMP + H(+). It catalyses the reaction [alpha-N-acetylneuraminyl-(2-&gt;8)](n)-alpha-N-acetylneuraminyl-(2-&gt;8)-alpha-N-acetylneuraminyl-(2-&gt;3)-beta-D-galactosyl-(1-&gt;4)-beta-D-glucosyl-(1&lt;-&gt;1)-ceramide + CMP-N-acetyl-beta-neuraminate = [alpha-N-acetylneuraminyl-(2-&gt;8)](n+1)-alpha-N-acetylneuraminyl-(2-&gt;8)-alpha-N-acetylneuraminyl-(2-&gt;3)-beta-D-galactosyl-(1-&gt;4)-beta-D-glucosyl-(1&lt;-&gt;1)-ceramide + CMP + H(+). Its pathway is protein modification; protein glycosylation. It participates in lipid metabolism; sphingolipid metabolism. In terms of biological role, catalyzes the addition of sialic acid in alpha 2,8-linkage to the sialic acid moiety of the ganglioside GM3 to form ganglioside GD3; gangliosides are a subfamily of complex glycosphingolipds that contain one or more residues of sialic acid. Can catalyze the addition of a second alpha-2,8-sialic acid to GD3 to form GT3. Can use GM1b, GD1a and GT1b as acceptor substrates to synthesize GD1c, GT1a and GQ1b respectively. Can synthesize unusual tetra- and pentasialylated lactosylceramide derivatives identified as GQ3 (II3Neu5Ac4-Gg2Cer) and GP3 (II3Neu5Ac5-Gg2Cer) in breast cancer cells. In Homo sapiens (Human), this protein is Alpha-N-acetylneuraminide alpha-2,8-sialyltransferase.